Consider the following 173-residue polypeptide: MKTKEIVDDVTMKRAITRITYEIIERNKQLDNVVLAGIKTRGVFLARRIQERLHQLEGLDLPIGELDTKPFRDDMRVEEDTTLMSVDITGKDVILIDDVLYTGRTIRAAIDNLVSLGRPARVSLAVLVDRGHRELPIRADYVGKNIPTSSVEEIVVEVVEVDGRDRVSIIDPT.

Residues 40–41 (TR), 97–105 (DDVLYTGRT), and arginine 130 each bind substrate. Positions 93 to 105 (VILIDDVLYTGRT) match the PRPP-binding motif.

Belongs to the purine/pyrimidine phosphoribosyltransferase family. PyrR subfamily. As to quaternary structure, homodimer and homohexamer; in equilibrium.

It catalyses the reaction UMP + diphosphate = 5-phospho-alpha-D-ribose 1-diphosphate + uracil. Regulates transcriptional attenuation of the pyrimidine nucleotide (pyr) operon by binding in a uridine-dependent manner to specific sites on pyr mRNA. This disrupts an antiterminator hairpin in the RNA and favors formation of a downstream transcription terminator, leading to a reduced expression of downstream genes. Functionally, also displays a weak uracil phosphoribosyltransferase activity which is not physiologically significant. The chain is Bifunctional protein PyrR from Streptococcus pyogenes serotype M6 (strain ATCC BAA-946 / MGAS10394).